The sequence spans 91 residues: Putative defective replication initiation protein (91 aa).

This is Putative defective replication initiation protein (repA1) from Escherichia coli (strain K12).